A 220-amino-acid polypeptide reads, in one-letter code: MELYLDTANVAEVERLARIFPIAGVTTNPSIVAASKESIWDVLPRLQNAIGEEGTLFAQTMSRNAKGMVEEAKRLNNAIPGIVVKIPVTAEGLAAIKLLKKEGIVTLGTAVYSASQGLLAALAGAKYVAPYVNRVDAQGGDGIRMVQELQTLLEHHAPDSMVLAASFKTPRQALDCLLAGCQAITLPLDVAQQMLNTPAVESAIEKFEQDWKNAFGNLNL.

The Schiff-base intermediate with substrate role is filled by Lys85.

The protein belongs to the transaldolase family. Type 3A subfamily. As to quaternary structure, homodecamer.

Its subcellular location is the cytoplasm. It catalyses the reaction beta-D-fructose 6-phosphate = dihydroxyacetone + D-glyceraldehyde 3-phosphate. Functionally, catalyzes the reversible formation of fructose 6-phosphate from dihydroxyacetone and D-glyceraldehyde 3-phosphate via an aldolization reaction. This Salmonella gallinarum (strain 287/91 / NCTC 13346) protein is Fructose-6-phosphate aldolase.